The primary structure comprises 874 residues: Trimodular acetylaranotin synthesis protein ataIMG (874 aa).

The segment at 1 to 339 is aminotransferase ataI; that stretch reads MANLSGLSNR…DSGLLRASSI (339 aa). The segment at 20–39 is disordered; it reads RFGFQTTQQAKPTESSKTPI. Polar residues predominate over residues 23–37; that stretch reads FQTTQQAKPTESSKT. Residues 340-668 form an O-methyltransferase ataM region; it reads SYNSMVKGSS…QERTEAEWRT (329 aa). Aspartate 625 is a binding site for S-adenosyl-L-methionine. The glutathione S-transferase ataG stretch occupies residues 669–874; that stretch reads LAGRTGWEIR…VMEMGPQIGH (206 aa). The GST N-terminal domain maps to 699–766; it reads KPLILAHELE…YLADRFDDGT (68 aa). The GST C-terminal domain maps to 739–874; it reads DPETKAEVIV…VMEMGPQIGH (136 aa).

In the N-terminal section; belongs to the class-I pyridoxal-phosphate-dependent aminotransferase family. It in the 2nd section; belongs to the class I-like SAM-binding methyltransferase superfamily. Cation-independent O-methyltransferase family. This sequence in the C-terminal section; belongs to the GST superfamily. The cofactor is pyridoxal 5'-phosphate.

It catalyses the reaction RX + glutathione = an S-substituted glutathione + a halide anion + H(+). Its pathway is mycotoxin biosynthesis. In terms of biological role, trimodular acetylaranotin synthesis protein; part of the gene cluster that mediates the biosynthesis of acetylaranotin, a member of the epipolythiodioxopiperazine (ETP) class of toxins characterized by a disulfide-bridged cyclic dipeptide. The first step of acetylaranotin biosynthesis is performed by the NRPS ataP which produces diketopiperazine cyclo-L-Phe-L-Phe via the condensation of 2 phenylalanines (L-Phe). The ataC domain of ataTC then catalyzes the formation of bishydroxylation of cyclo-L-Phe-L-Phe. The glutathione S-transferase domain ataG in ataIMG further catalyzes the conjugation of two glutathiones to the bishydroxylated intermediate. Next, the dipeptidase ataJ removes the Glu residues. The following step is performed by the carbon sulfur lyase domain ataI of ataIMG which may convert the bis-cysteinyl adduct to yield an epidithiol intermediate. The ataT domain from ataTC then catalyzes the oxidation of the free dithiols, followed by a cyclization step catalyzed by the cytochrome P450 ataF. AtaF probably acts as an epoxidase to promote a dual epoxidation formation at C8 and C9 along with C8' and C9', followed by the spontaneous nucleophilic attack of the amide nitrogens N10 and N10' to yield an intermediate with the pyrrolidine partial structure. The final steps of acetylaranotin biosynthesis involve the acetylation and ring rearrangement of an epitetrathiodiketopiperazine intermediate to produce acetylaranotin. AtaH probably catalyzes the acetylation of epitetrathiodiketopiperazine to produce a diacetate and ataY is responsible for the formation of the dihydrooxepin moiety that converts the diacetate intermediate to acetylaranotin via acetylapoaranotin. Both enzymes could function independently in the absence of the other. The acetylaranotin bis-thiomethyltransferase ataS located outside of acetylaranotin gene cluster is the main thiomethyltransferase responsible for converting acetylaranotin and its related intermediates to their methylated forms. The sequence is that of Trimodular acetylaranotin synthesis protein ataIMG from Aspergillus terreus (strain NIH 2624 / FGSC A1156).